Consider the following 251-residue polypeptide: E3 ubiquitin-protein ligase MARCHF3 (251 aa).

The RING-CH-type zinc finger occupies 61-121 (QSFNDRPMCR…ELCHFRFSVE (61 aa)). Residues cysteine 69, cysteine 72, cysteine 85, cysteine 87, histidine 95, cysteine 98, cysteine 111, and cysteine 114 each contribute to the Zn(2+) site. The next 2 membrane-spanning stretches (helical) occupy residues 143–163 (LFGD…SGWL) and 180–200 (AVGL…WTLV).

The protein resides in the cytoplasmic vesicle membrane. The protein localises to the early endosome membrane. The enzyme catalyses S-ubiquitinyl-[E2 ubiquitin-conjugating enzyme]-L-cysteine + [acceptor protein]-L-lysine = [E2 ubiquitin-conjugating enzyme]-L-cysteine + N(6)-ubiquitinyl-[acceptor protein]-L-lysine.. It functions in the pathway protein modification; protein ubiquitination. In terms of biological role, E3 ubiquitin-protein ligase which may be involved in endosomal trafficking. E3 ubiquitin ligases accept ubiquitin from an E2 ubiquitin-conjugating enzyme in the form of a thioester and then directly transfer the ubiquitin to targeted substrates. This Xenopus tropicalis (Western clawed frog) protein is E3 ubiquitin-protein ligase MARCHF3 (marchf3).